Consider the following 28-residue polypeptide: M-poneritoxin-Dq4a (28 aa).

A28 is modified (alanine amide).

In terms of tissue distribution, expressed by the venom gland.

It is found in the secreted. The synthetic peptide has weak antimicrobial activity against Gram-negative bacterium E.coli ATCC 10536. It does not show antimicrobial activity against the Gram-positive bacteria B.amyloliquefacies S499, L.monocytogenes 2231 and S.aureus ATCC 29213, against the Gram-negative bacteria P.putida BTP1 and P.aeruginosa PaO1, or against the fungi S.cerevisiae, R.mucilaginosa, C.cucumerinum, F.oxysporum and B.cinerea. In Dinoponera quadriceps (South American ant), this protein is M-poneritoxin-Dq4a.